The chain runs to 713 residues: Zinc finger and BTB domain-containing protein 1 (713 aa).

K3 participates in a covalent cross-link: Glycyl lysine isopeptide (Lys-Gly) (interchain with G-Cter in SUMO2). The BTB domain occupies 24–91; it reads CDCCIAIDDI…MYLGKIMTAP (68 aa). Glycyl lysine isopeptide (Lys-Gly) (interchain with G-Cter in SUMO2) cross-links involve residues K200 and K205. The segment at 216-242 adopts a C2H2-type 1; atypical zinc-finger fold; that stretch reads FTCDSCGFGFSCEKLLDEHVLTCTNRH. Glycyl lysine isopeptide (Lys-Gly) (interchain with G-Cter in SUMO2) cross-links involve residues K261, K266, K276, K284, K304, K316, K328, K340, and K346. The interval 270–319 is disordered; that stretch reads AEKDSSKTFSAQPDKYREDANQAPDDSASTTGSRKSTVEAGIAGEEKSRA. S355 is subject to Phosphoserine. Phosphothreonine is present on T356. K381 is covalently cross-linked (Glycyl lysine isopeptide (Lys-Gly) (interchain with G-Cter in SUMO2)). A C2H2-type 2; atypical zinc finger spans residues 448–470; sequence CACGKCGQILVKGRQLQEHAQRC. K528 participates in a covalent cross-link: Glycyl lysine isopeptide (Lys-Gly) (interchain with G-Cter in SUMO2). Residues 533 to 558 form a UBZ-type zinc finger; sequence PFRCPNCGQRFETENLVVEHMSSCLD. K563 is covalently cross-linked (Glycyl lysine isopeptide (Lys-Gly) (interchain with G-Cter in SUMO2)). C2H2-type zinc fingers lie at residues 578-600, 606-628, 634-656, 662-684, and 686-709; these read HFCN…YTVH, FVCQ…NDMH, YVCS…MISH, TICQ…MDVH, and YTCG…NAKH.

In terms of assembly, homodimer. Homodimer. Interacts (via BTB domain) with TRIM28 (unphosphorylated or phosphorylated form). Post-translationally, sumoylated with SUMO2 at Lys-328 and to a lesser extent at Lys-266. Sumoylation inhibits its transcriptional repression activity and regulates its subcellular localization. As to expression, expressed strongly in thymus and spleen, less in lymph nodes and peripheral blood mononuclear cells (PBMCs) and weakly in bone marrow. Strongly expressed in immature, but weakly in mature bone marrow-lymphocyte B.

The protein localises to the nucleus. It is found in the nucleoplasm. Functionally, acts as a transcriptional repressor. Represses cAMP-responsive element (CRE)-mediated transcriptional activation. In addition, has a role in translesion DNA synthesis. Requires for UV-inducible RAD18 loading, PCNA monoubiquitination, POLH recruitment to replication factories and efficient translesion DNA synthesis. Plays a key role in the transcriptional regulation of T lymphocyte development. This is Zinc finger and BTB domain-containing protein 1 (Zbtb1) from Mus musculus (Mouse).